A 251-amino-acid chain; its full sequence is NADPH-dependent oxidoreductase (251 aa).

The protein belongs to the flavin oxidoreductase frp family. FMN serves as cofactor.

Functionally, reduces FMN, organic nitro compounds and disulfide DTNB. Involved in maintenance of the cellular redox state and the disulfide stress response. The chain is NADPH-dependent oxidoreductase (nfrA) from Staphylococcus aureus (strain USA300).